We begin with the raw amino-acid sequence, 366 residues long: Galactoside alpha-(1,2)-fucosyltransferase 1 (366 aa).

Over 1–8 (MWPLSHRH) the chain is Cytoplasmic. The chain crosses the membrane as a helical; Signal-anchor for type II membrane protein span at residues 9–25 (LCLAFLLVCVLSAISFF). At 26-366 (LHIHQDSIRH…LSPLWTLAEP (341 aa)) the chain is on the lumenal side. Asn-66, Asn-302, and Asn-328 each carry an N-linked (GlcNAc...) asparagine glycan.

It belongs to the glycosyltransferase 11 family.

Its subcellular location is the golgi apparatus. The protein localises to the golgi stack membrane. The enzyme catalyses a beta-D-galactosyl-(1-&gt;4)-N-acetyl-beta-D-glucosaminyl derivative + GDP-beta-L-fucose = an alpha-L-Fuc-(1-&gt;2)-beta-D-Gal-(1-&gt;4)-beta-D-GlcNAc derivative + GDP + H(+). It catalyses the reaction a ganglioside GA1 + GDP-beta-L-fucose = a ganglioside Fuc-GA1 + GDP + H(+). It carries out the reaction a beta-D-Gal-(1-&gt;3)-beta-D-GlcNAc-(1-&gt;3)-beta-D-Gal-(1-&gt;4)-beta-D-Glc-(1&lt;-&gt;1')-Cer(d18:1(4E)) + GDP-beta-L-fucose = alpha-L-fucosyl-(1-&gt;2)- beta-D-galactosyl-(1-&gt;3)-N-acetyl-beta-D-glucosaminyl-(1-&gt;3)-beta-D-galactosyl-(1-&gt;4)-beta-D-glucosyl-(1&lt;-&gt;1')-N-acylsphing-4-enine + GDP + H(+). The catalysed reaction is a neolactoside nLc4Cer(d18:1(4E)) + GDP-beta-L-fucose = a neolactoside IV(2)-alpha-Fuc-nLc4Cer(d18:1(4E)) + GDP + H(+). The enzyme catalyses a ganglioside GM1 + GDP-beta-L-fucose = a ganglioside Fuc-GM1 + GDP + H(+). It catalyses the reaction beta-D-galactosyl-(1-&gt;3)-N-acetyl-D-galactosamine + GDP-beta-L-fucose = alpha-L-fucosyl-(1-&gt;2)-beta-D-galactosyl-(1-&gt;3)-N-acetyl-D-galactosamine + GDP + H(+). It participates in protein modification; protein glycosylation. Its function is as follows. Catalyzes the transfer of L-fucose, from a guanosine diphosphate-beta-L-fucose, to the terminal galactose residue of glycoconjugates through an alpha(1,2) linkage leading to H antigen synthesis that is an intermediate substrate in the synthesis of ABO blood group antigens. H antigen is essential for maturation of the glomerular layer of the main olfactory bulb, in cell migration and early cell-cell contacts during tumor associated angiogenesis. Preferentially fucosylates soluble lactose and to a lesser extent fucosylates glycolipids gangliosides GA1 and GM1a. This is Galactoside alpha-(1,2)-fucosyltransferase 1 from Aotus azarae (Azara's night monkey).